Here is a 213-residue protein sequence, read N- to C-terminus: Orotidine 5'-phosphate decarboxylase (213 aa).

Residues aspartate 6, lysine 25, 52–61 (DLKLADIDNT), serine 109, 158–168 (PGVGAQGAMIG), glycine 181, and arginine 182 each bind substrate. Catalysis depends on lysine 54, which acts as the Proton donor.

It belongs to the OMP decarboxylase family. Type 1 subfamily. As to quaternary structure, homodimer.

It catalyses the reaction orotidine 5'-phosphate + H(+) = UMP + CO2. The protein operates within pyrimidine metabolism; UMP biosynthesis via de novo pathway; UMP from orotate: step 2/2. In terms of biological role, catalyzes the decarboxylation of orotidine 5'-monophosphate (OMP) to uridine 5'-monophosphate (UMP). This Sulfurisphaera tokodaii (strain DSM 16993 / JCM 10545 / NBRC 100140 / 7) (Sulfolobus tokodaii) protein is Orotidine 5'-phosphate decarboxylase.